Consider the following 78-residue polypeptide: Putative membrane protein insertion efficiency factor (78 aa).

It belongs to the UPF0161 family.

It localises to the cell inner membrane. Functionally, could be involved in insertion of integral membrane proteins into the membrane. In Prochlorococcus marinus (strain MIT 9312), this protein is Putative membrane protein insertion efficiency factor.